Consider the following 2195-residue polypeptide: Integrator complex subunit 1 (2195 aa).

Positions 1-86 (MNRAKPTTVR…RPKLSSTPPL (86 aa)) are disordered. Ser-13 is subject to Phosphoserine. Polar residues predominate over residues 34-45 (GQASESKTTSTL). Lys-47 carries the N6-acetyllysine modification. Over residues 62-75 (SASLSGTSALTGLT) the composition is skewed to low complexity. Phosphothreonine is present on Thr-83. Ser-87 carries the post-translational modification Phosphoserine. The interval 267–297 (LLQGEGARSGGELGAGSSPHPSLTEEEDSQT) is disordered. Phosphoserine is present on residues Ser-307 and Ser-926. The segment at 923–947 (STASGEEDDEGESREQKAKKRQRQQ) is disordered. A helical transmembrane segment spans residues 1165 to 1185 (HILVVHAMVILLTLGPPRSGD). A disordered region spans residues 1313–1347 (SLPPRRDSTEAPKPESSPEPPPGQGRTRAGTQVPV). Over residues 1316 to 1325 (PRRDSTEAPK) the composition is skewed to basic and acidic residues. A phosphoserine mark is found at Ser-1320, Ser-1328, and Ser-1329.

It belongs to the Integrator subunit 1 family. In terms of assembly, component of the Integrator complex, composed of core subunits INTS1, INTS2, INTS3, INTS4, INTS5, INTS6, INTS7, INTS8, INTS9/RC74, INTS10, INTS11/CPSF3L, INTS12, INTS13, INTS14 and INTS15. The core complex associates with protein phosphatase 2A subunits PPP2CA and PPP2R1A, to form the Integrator-PP2A (INTAC) complex. Interacts with ESRRB, ESRRB is not a core component of the Integrator complex and this association is a bridge for the interaction with the multiprotein complex Integrator; attracts the transcriptional machinery.

It is found in the nucleus. The protein localises to the nucleus membrane. Its function is as follows. Component of the integrator complex, a multiprotein complex that terminates RNA polymerase II (Pol II) transcription in the promoter-proximal region of genes. The integrator complex provides a quality checkpoint during transcription elongation by driving premature transcription termination of transcripts that are unfavorably configured for transcriptional elongation: the complex terminates transcription by (1) catalyzing dephosphorylation of the C-terminal domain (CTD) of Pol II subunit POLR2A/RPB1 and SUPT5H/SPT5, (2) degrading the exiting nascent RNA transcript via endonuclease activity and (3) promoting the release of Pol II from bound DNA. The integrator complex is also involved in terminating the synthesis of non-coding Pol II transcripts, such as enhancer RNAs (eRNAs), small nuclear RNAs (snRNAs), telomerase RNAs and long non-coding RNAs (lncRNAs). Within the integrator complex, INTS1 is involved in the post-termination step: INTS1 displaces INTS3 and the SOSS factors, allowing the integrator complex to return to the closed conformation, ready to bind to the paused elongation complex for another termination cycle. Mediates recruitment of cytoplasmic dynein to the nuclear envelope, probably as component of the integrator complex. This Mus musculus (Mouse) protein is Integrator complex subunit 1.